The chain runs to 161 residues: Dermonecrotic toxin LarSicTox-alphaI-1 (161 aa).

The protein belongs to the arthropod phospholipase D family. Class II subfamily. Mg(2+) serves as cofactor. In terms of processing, contains 2 disulfide bonds. In terms of tissue distribution, expressed by the venom gland.

It localises to the secreted. It carries out the reaction an N-(acyl)-sphingosylphosphocholine = an N-(acyl)-sphingosyl-1,3-cyclic phosphate + choline. It catalyses the reaction an N-(acyl)-sphingosylphosphoethanolamine = an N-(acyl)-sphingosyl-1,3-cyclic phosphate + ethanolamine. The enzyme catalyses a 1-acyl-sn-glycero-3-phosphocholine = a 1-acyl-sn-glycero-2,3-cyclic phosphate + choline. The catalysed reaction is a 1-acyl-sn-glycero-3-phosphoethanolamine = a 1-acyl-sn-glycero-2,3-cyclic phosphate + ethanolamine. In terms of biological role, dermonecrotic toxins cleave the phosphodiester linkage between the phosphate and headgroup of certain phospholipids (sphingolipid and lysolipid substrates), forming an alcohol (often choline) and a cyclic phosphate. This toxin acts on sphingomyelin (SM). It may also act on ceramide phosphoethanolamine (CPE), lysophosphatidylcholine (LPC) and lysophosphatidylethanolamine (LPE), but not on lysophosphatidylserine (LPS), and lysophosphatidylglycerol (LPG). It acts by transphosphatidylation, releasing exclusively cyclic phosphate products as second products. Induces dermonecrosis, hemolysis, increased vascular permeability, edema, inflammatory response, and platelet aggregation. This is Dermonecrotic toxin LarSicTox-alphaI-1 from Loxosceles arizonica (Arizona brown spider).